The primary structure comprises 227 residues: Lipoprotein-releasing system ATP-binding protein LolD (227 aa).

Positions 6–227 (LTSQKLYKSY…LHEGSLYARE (222 aa)) constitute an ABC transporter domain. 42-49 (GPSGSGKS) provides a ligand contact to ATP.

Belongs to the ABC transporter superfamily. Lipoprotein translocase (TC 3.A.1.125) family. The complex is composed of two ATP-binding proteins (LolD) and two transmembrane proteins (LolC and LolE).

It localises to the cell inner membrane. In terms of biological role, part of the ABC transporter complex LolCDE involved in the translocation of mature outer membrane-directed lipoproteins, from the inner membrane to the periplasmic chaperone, LolA. Responsible for the formation of the LolA-lipoprotein complex in an ATP-dependent manner. This is Lipoprotein-releasing system ATP-binding protein LolD from Legionella pneumophila (strain Paris).